We begin with the raw amino-acid sequence, 654 residues long: Protein THALLO (654 aa).

The segment covering Met1–Lys16 has biased composition (basic residues). Disordered stretches follow at residues Met1 to Glu23, Lys35 to Glu145, and Ser164 to His212. Positions Gly2 to Lys9 match the Nuclear localization signal 1 motif. Acidic residues-rich tracts occupy residues Val44–Val56, Gly64–Glu82, and Gly103–Lys114. The stretch at Leu140 to Glu160 forms a coiled coil. Residues Gly171–Asp181 are compositionally biased toward acidic residues. Over residues Arg182–His212 the composition is skewed to basic and acidic residues. Positions Leu243–Lys263 form a coiled coil. 3 disordered regions span residues Ser362 to Asp397, Val470 to Gly492, and Lys509 to Met654. Residues Ser364–Lys387 are compositionally biased toward basic and acidic residues. Over residues Ser524–Asp546 the composition is skewed to acidic residues. Residues Val552–Ala561 are compositionally biased toward basic residues. A compositionally biased stretch (polar residues) spans Ser588 to Arg599. Residues Pro608–Asn615 carry the Nuclear localization signal 2 motif. A compositionally biased stretch (polar residues) spans Asn645 to Met654.

Belongs to the SAS10 family. As to quaternary structure, interacts with NUCL1, NUCL2, JMJ14, NOF1 and MPP10 in the nucleus. As to expression, mainly present in tissues undergoing rapid cellular growth and differentiation. Mostly expressed in shoots and flowers, and, to a lower extent, in leaves, siliques, roots and seedlings.

It is found in the nucleus. Its subcellular location is the nucleolus. Its function is as follows. Essential protein during embryogenesis. Involved both in gene transcription regulation and in processing events critical for proper rRNA biogenesis and nucleolar organization during reproduction; contributes to pre-rRNA processing at the 5' external transcribed spacer. Binds RNA. This chain is Protein THALLO, found in Arabidopsis thaliana (Mouse-ear cress).